Consider the following 66-residue polypeptide: Phylloseptin-H5 (66 aa).

A signal peptide spans 1-22 (MAFLKKSLFLVLFLGLVSLSIC). The propeptide occupies 23–44 (EEEKRETEEEENEQEDDDKSEE). The segment at 24–44 (EEKRETEEEENEQEDDDKSEE) is disordered. Over residues 30–41 (EEEENEQEDDDK) the composition is skewed to acidic residues. Residue Phe-65 is modified to Phenylalanine amide.

As to expression, expressed by the skin glands.

It localises to the secreted. Its function is as follows. Has antibacterial activity against the Gram-negative bacteria E.coli and P.aeruginosa, and the Gram-positive bacterium S.aureus. No hemolytic activity. The chain is Phylloseptin-H5 (psn7) from Pithecopus hypochondrialis (Orange-legged leaf frog).